Reading from the N-terminus, the 289-residue chain is uncharacterized protein (289 aa).

The next 10 membrane-spanning stretches (helical) occupy residues 7 to 27, 33 to 53, 65 to 85, 92 to 112, 123 to 143, 148 to 168, 182 to 202, 212 to 232, 241 to 261, and 265 to 285; these read LLLA…KIGL, FNLA…WVFW, WLHL…FQFL, ATNA…WGLV, GVFL…LEFF, IFGD…TVLG, AYAF…SGFA, VAAL…VWYY, SVAV…FYAL, and PDFF…LTTA. EamA domains follow at residues 14-136 and 159-285; these read LIWA…LIVS and FLWA…LTTA.

This sequence belongs to the EamA transporter family.

It localises to the cell membrane. This is an uncharacterized protein from Archaeoglobus fulgidus (strain ATCC 49558 / DSM 4304 / JCM 9628 / NBRC 100126 / VC-16).